The following is a 211-amino-acid chain: Uracil phosphoribosyltransferase (211 aa).

Residues arginine 78, arginine 103, and 130 to 138 (DPMLATGGT) each bind 5-phospho-alpha-D-ribose 1-diphosphate. Uracil-binding positions include isoleucine 195 and 200 to 202 (GDA). 5-phospho-alpha-D-ribose 1-diphosphate is bound at residue aspartate 201.

The protein belongs to the UPRTase family. Mg(2+) serves as cofactor.

It catalyses the reaction UMP + diphosphate = 5-phospho-alpha-D-ribose 1-diphosphate + uracil. It participates in pyrimidine metabolism; UMP biosynthesis via salvage pathway; UMP from uracil: step 1/1. With respect to regulation, allosterically activated by GTP. Functionally, catalyzes the conversion of uracil and 5-phospho-alpha-D-ribose 1-diphosphate (PRPP) to UMP and diphosphate. The sequence is that of Uracil phosphoribosyltransferase from Streptomyces avermitilis (strain ATCC 31267 / DSM 46492 / JCM 5070 / NBRC 14893 / NCIMB 12804 / NRRL 8165 / MA-4680).